The sequence spans 644 residues: Interleukin-23 receptor (644 aa).

A signal peptide spans 1–23 (MSHLTLQLHVVIALYVLFRWCHG). At 24–374 (GITSINCSGD…PASGNHQDIG (351 aa)) the chain is on the extracellular side. Residues N47, N130, and N232 are each glycosylated (N-linked (GlcNAc...) asparagine). 2 consecutive Fibronectin type-III domains span residues 127 to 217 (APSN…LDDI) and 219 to 318 (IPSA…TSQE). The helical transmembrane segment at 375 to 395 (LLSGMVFLAIMLPIFSLIGIF) threads the bilayer. Over 396 to 644 (NRSLRIGIKR…HFSRISLFQK (249 aa)) the chain is Cytoplasmic.

This sequence belongs to the type I cytokine receptor family. Type 2 subfamily. Heterodimer with IL12RB1. In presence of IL23, the heterodimer forms the IL23 receptor. Interacts with JAK2 and in presence of IL23 with STAT3. Post-translationally, phosphorylated in response to IL23. Expressed by Th1, Th2 and dendritic cells.

Its subcellular location is the cell membrane. Its function is as follows. Associates with IL12RB1 to form the interleukin-23 receptor. Binds IL23 and mediates T-cells, NK cells and possibly certain macrophage/myeloid cells stimulation probably through activation of the Jak-Stat signaling cascade. IL23 functions in innate and adaptive immunity and may participate in acute response to infection in peripheral tissues. IL23 may be responsible for autoimmune inflammatory diseases and be important for tumorigenesis. The chain is Interleukin-23 receptor (Il23r) from Mus musculus (Mouse).